Reading from the N-terminus, the 403-residue chain is Cytoplasmic tRNA 2-thiolation protein 2 (403 aa).

Belongs to the CTU2/NCS2 family.

It is found in the cytoplasm. It functions in the pathway tRNA modification; 5-methoxycarbonylmethyl-2-thiouridine-tRNA biosynthesis. In terms of biological role, plays a central role in 2-thiolation of mcm(5)S(2)U at tRNA wobble positions of tRNA(Lys), tRNA(Glu) and tRNA(Gln). May act by forming a heterodimer with NCS6/CTU1 that ligates sulfur from thiocarboxylated URM1 onto the uridine of tRNAs at wobble position. The polypeptide is Cytoplasmic tRNA 2-thiolation protein 2 (Drosophila ananassae (Fruit fly)).